We begin with the raw amino-acid sequence, 397 residues long: Subtilisin-like protease 3 (397 aa).

The first 19 residues, 1–19 (MGCIKVISVFLAAVAAVDA), serve as a signal peptide directing secretion. Residues 20–116 (RAFFHNRGGN…VEHDRVVKLA (97 aa)) constitute a propeptide that is removed on maturation. Positions 35–116 (SYIVVMKDGV…VEHDRVVKLA (82 aa)) constitute an Inhibitor I9 domain. The 272-residue stretch at 126–397 (TWGLGRVSHK…NKLLYNGSGR (272 aa)) folds into the Peptidase S8 domain. Active-site charge relay system residues include Asp-158 and His-189. Asn-250 is a glycosylation site (N-linked (GlcNAc...) asparagine). Ser-344 acts as the Charge relay system in catalysis. N-linked (GlcNAc...) asparagine glycosylation occurs at Asn-393.

It belongs to the peptidase S8 family.

The protein resides in the secreted. Functionally, secreted subtilisin-like serine protease with keratinolytic activity that contributes to pathogenicity. This Arthroderma otae (strain ATCC MYA-4605 / CBS 113480) (Microsporum canis) protein is Subtilisin-like protease 3 (SUB3).